A 177-amino-acid polypeptide reads, in one-letter code: ATP synthase subunit delta (177 aa).

It belongs to the ATPase delta chain family. As to quaternary structure, F-type ATPases have 2 components, F(1) - the catalytic core - and F(0) - the membrane proton channel. F(1) has five subunits: alpha(3), beta(3), gamma(1), delta(1), epsilon(1). F(0) has three main subunits: a(1), b(2) and c(10-14). The alpha and beta chains form an alternating ring which encloses part of the gamma chain. F(1) is attached to F(0) by a central stalk formed by the gamma and epsilon chains, while a peripheral stalk is formed by the delta and b chains.

It is found in the cell inner membrane. F(1)F(0) ATP synthase produces ATP from ADP in the presence of a proton or sodium gradient. F-type ATPases consist of two structural domains, F(1) containing the extramembraneous catalytic core and F(0) containing the membrane proton channel, linked together by a central stalk and a peripheral stalk. During catalysis, ATP synthesis in the catalytic domain of F(1) is coupled via a rotary mechanism of the central stalk subunits to proton translocation. Functionally, this protein is part of the stalk that links CF(0) to CF(1). It either transmits conformational changes from CF(0) to CF(1) or is implicated in proton conduction. The protein is ATP synthase subunit delta of Herminiimonas arsenicoxydans.